Here is a 273-residue protein sequence, read N- to C-terminus: MSNAEIRIAIVGAAGRMGRQLIQAVVLAEGARLGAALVRSGSSLVGTDAGELAGCGALGITLTDDLEAVANDFDVLIDFTRPEGTLHYLAFCRQHHKAMVIGTTGFDDAGKAAIEAAAQDIAIVFAANFSVGVNVVLKLVEKAAKVMGEYADIEIIEAHHRHKVDAPSGTALAMGEAIADAMSWDLKQHAVYAREGFTGEREAQTIGFATVRAGDIVGEHTAMFADIGERVEISHKASSRMTFAKGAVRAAIWLDGRKKGLYDMRCVLNLHDL.

12–17 is an NAD(+) binding site; sequence GAAGRM. Arg-39 provides a ligand contact to NADP(+). Residues 102–104 and 126–129 each bind NAD(+); these read GTT and AANF. His-159 (proton donor/acceptor) is an active-site residue. His-160 is a binding site for (S)-2,3,4,5-tetrahydrodipicolinate. The Proton donor role is filled by Lys-163. 169-170 lines the (S)-2,3,4,5-tetrahydrodipicolinate pocket; the sequence is GT.

Belongs to the DapB family. In terms of assembly, homotetramer.

The protein resides in the cytoplasm. The enzyme catalyses (S)-2,3,4,5-tetrahydrodipicolinate + NAD(+) + H2O = (2S,4S)-4-hydroxy-2,3,4,5-tetrahydrodipicolinate + NADH + H(+). The catalysed reaction is (S)-2,3,4,5-tetrahydrodipicolinate + NADP(+) + H2O = (2S,4S)-4-hydroxy-2,3,4,5-tetrahydrodipicolinate + NADPH + H(+). It participates in amino-acid biosynthesis; L-lysine biosynthesis via DAP pathway; (S)-tetrahydrodipicolinate from L-aspartate: step 4/4. In terms of biological role, catalyzes the conversion of 4-hydroxy-tetrahydrodipicolinate (HTPA) to tetrahydrodipicolinate. The sequence is that of 4-hydroxy-tetrahydrodipicolinate reductase from Erwinia tasmaniensis (strain DSM 17950 / CFBP 7177 / CIP 109463 / NCPPB 4357 / Et1/99).